Consider the following 621-residue polypeptide: MASIPALTDELESVSSELHAVDIQIQELTERQHELLQRKSVLTKRIKQCLEDSAAEASGDCDTSPAAWSKEDFPWSGKVKHVLRDVFKLQKFRPLQLETVNATMARKDIFLVMPTGGGKSLCYQLPALCSDGFTLVICPLISLMEDQLMVLQQLGISATMLNSSSSKEHVKCVHTEMMNKNSHLKLIYVTPEKIAKSKMFMSRLEKAYEAGRLTGVAVDEVHCCSQWGHDFRPDYKALGILKRQFPNISLIGLTATATNHVLKDAQKILCVEKCLTFTASFNRPNLYYEVRQKPSSAEDFIENIANLINGRYKGKSGIIYCFSQKDSEQVTISLQKLGVRAGTYHANMEPEDRTKVHTQWSANELQVVVATVAFGMGIDKPDVRFVIHHSMSKSMENYYQESGRAGRDDWRADCILYYGFGDIFRISSMVVMENVGQQKLYEMVSYCQNISKCRRALIAQHFDEVWNADACNKMCDNCCKDDSFEKKNITEHCQALIKILKQAEGLNEKLTPLKLIDAWMGKGAAKFRVAGVAVPALPREDLEKIIVHALLQQYLKEDYSFTAYATISYLKVGPRASLLSNEGHAVTMQVKRSTQSSVRAASPEACEVDSKGKEKSSAVLC.

The Helicase ATP-binding domain maps to 100–275; sequence VNATMARKDI…QKILCVEKCL (176 aa). Residue 113-120 participates in ATP binding; that stretch reads MPTGGGKS. The DEVH box motif lies at 219-222; sequence DEVH. The Helicase C-terminal domain occupies 296-451; the sequence is SAEDFIENIA…EMVSYCQNIS (156 aa). Positions 453, 471, 475, and 478 each coordinate Zn(2+). 2 positions are modified to N6-acetyllysine: K514 and K522. Residues S597 and S602 each carry the phosphoserine modification.

This sequence belongs to the helicase family. RecQ subfamily. May form homodimers or higher order oligomers. Interacts with EXO1. Interacts with MLH1. Interacts with PARP1. Requires Mg(2+) as cofactor. It depends on Mn(2+) as a cofactor. Zn(2+) is required as a cofactor.

It is found in the nucleus. It carries out the reaction Couples ATP hydrolysis with the unwinding of duplex DNA by translocating in the 3'-5' direction.. It catalyses the reaction ATP + H2O = ADP + phosphate + H(+). The catalysed reaction is dATP + H2O = dADP + phosphate + H(+). In terms of biological role, DNA helicase that plays a role in DNA damage repair and genome stability. Exhibits a magnesium- and ATP-dependent DNA-helicase activity that unwinds single- and double-stranded DNA in a 3'-5' direction. Plays a role in restoring regressed replication forks. Required to restart stalled replication forks induced by abortive topoisomerase 1 and 2 lesions. May play a role in the repair of DNA that is damaged by ultraviolet light or other mutagens. The chain is ATP-dependent DNA helicase Q1 (Recql) from Rattus norvegicus (Rat).